The primary structure comprises 429 residues: Ribosomal RNA small subunit methyltransferase B (429 aa).

S-adenosyl-L-methionine-binding positions include 254–260 (CAAPGGK), Asp-277, Asp-303, and Asp-322. The active-site Nucleophile is the Cys-375.

This sequence belongs to the class I-like SAM-binding methyltransferase superfamily. RsmB/NOP family.

Its subcellular location is the cytoplasm. The enzyme catalyses cytidine(967) in 16S rRNA + S-adenosyl-L-methionine = 5-methylcytidine(967) in 16S rRNA + S-adenosyl-L-homocysteine + H(+). Its function is as follows. Specifically methylates the cytosine at position 967 (m5C967) of 16S rRNA. This chain is Ribosomal RNA small subunit methyltransferase B, found in Salmonella arizonae (strain ATCC BAA-731 / CDC346-86 / RSK2980).